A 323-amino-acid chain; its full sequence is DNA-directed RNA polymerase subunit alpha 1 (323 aa).

Residues 1–228 (MSNNNSKQEF…EQISVFVSLR (228 aa)) form an alpha N-terminal domain (alpha-NTD) region. Positions 244–323 (IDPILLKPID…DNFRELVEGK (80 aa)) are alpha C-terminal domain (alpha-CTD).

This sequence belongs to the RNA polymerase alpha chain family. In terms of assembly, homodimer. The RNAP catalytic core consists of 2 alpha, 1 beta, 1 beta' and 1 omega subunit. When a sigma factor is associated with the core the holoenzyme is formed, which can initiate transcription.

It catalyses the reaction RNA(n) + a ribonucleoside 5'-triphosphate = RNA(n+1) + diphosphate. Functionally, DNA-dependent RNA polymerase catalyzes the transcription of DNA into RNA using the four ribonucleoside triphosphates as substrates. The polypeptide is DNA-directed RNA polymerase subunit alpha 1 (Francisella tularensis subsp. novicida (strain U112)).